Consider the following 358-residue polypeptide: Peroxisome biogenesis protein 3-1 (358 aa).

A helical membrane pass occupies residues I15–Y32. Residues N33–A62 are a coiled coil.

It belongs to the peroxin-3 family.

The protein resides in the peroxisome membrane. Involved in morphology determination of peroxisomes, but not in import of peroxisomal matrix proteins. May act as a docking factor for PEX19 and be necessary for the import of peroxisomal membrane proteins in the peroxisomes. This chain is Peroxisome biogenesis protein 3-1 (PEX3-1), found in Arabidopsis thaliana (Mouse-ear cress).